Reading from the N-terminus, the 1390-residue chain is Bromodomain adjacent to zinc finger domain protein 2 (1390 aa).

3 disordered regions span residues 30-67, 178-215, and 235-269; these read AKIQKATASSPSKSTNGTSASTSAVPSTSGTSSSQNEA, AKKKPAGVASTSSASTSSSTPSTSSASITSSNNNAANN, and QKQQQQQKDTQKKADQAKKAKELAKQQQKEQDVKN. Positions 35–45 are enriched in polar residues; it reads ATASSPSKSTN. Low complexity-rich tracts occupy residues 46–63 and 186–215; these read GTSASTSAVPSTSGTSSS and ASTSSASTSSSTPSTSSASITSSNNNAANN. A compositionally biased stretch (basic and acidic residues) spans 243–269; that stretch reads DTQKKADQAKKAKELAKQQQKEQDVKN. The MBD domain maps to 323–395; the sequence is KTNEAMLRLP…DNFLFNTKLV (73 aa). The DDT domain occupies 524-588; the sequence is SQGFADALMV…LRLALEFPGM (65 aa). Residues 705–724 are compositionally biased toward basic and acidic residues; it reads KEEQNHESDSEPPTRPDTPK. A disordered region spans residues 705-729; the sequence is KEEQNHESDSEPPTRPDTPKKATVA. The PHD-type zinc finger occupies 1100-1149; the sequence is EALCQICKSMDGDEMLVCDGCESGCHMECFRPRMTKVPEGDWFCQRCREE. The disordered stretch occupies residues 1218–1241; the sequence is EERELEDDNHAENGENTKNGHMNG. A Bromo domain is found at 1273 to 1377; sequence LPKNMNKELC…KFFQKRWKQL (105 aa).

The protein belongs to the WAL family. Interacts with set-6. Broadly expressed in the nervous system, including head, body and tail neurons.

The protein localises to the nucleus. It localises to the chromosome. Functionally, chromatin reader protein, involved in positively modulating the rate of age-related behavioral deterioration. Positively modulates the level of global trimethylated 'Lys-9' of histone H3 (H3K9me3), but not of H3K9me2 or H3K9me1. May repress the expression of mitochondrial function-related genes by occupying their promoter regions, working in concert with histone methyltransferase, set-6. Involved in modulation of the mitochondrial unfolded protein response (UPR). Negatively regulates expression of bas-1, a serotonin (5-HT) and dopamine synthesizing enzyme (DOPA decarboxylase), with aging. Negatively modulates levels of endogenous 5-HT and dopamine with aging. Involved in modulating longevity, probably as a result of enhanced stress resistance via mechanisms related to dietary restriction and mitochondrial function. The polypeptide is Bromodomain adjacent to zinc finger domain protein 2 (Caenorhabditis elegans).